Here is a 271-residue protein sequence, read N- to C-terminus: 4-hydroxy-tetrahydrodipicolinate reductase (271 aa).

NAD(+)-binding positions include 10-15 (GAGGRM), glutamate 36, 100-102 (GTT), and 124-127 (SGNM). Histidine 157 serves as the catalytic Proton donor/acceptor. Residue histidine 158 participates in (S)-2,3,4,5-tetrahydrodipicolinate binding. Lysine 161 acts as the Proton donor in catalysis. 167-168 (GT) contacts (S)-2,3,4,5-tetrahydrodipicolinate.

Belongs to the DapB family.

It localises to the cytoplasm. It carries out the reaction (S)-2,3,4,5-tetrahydrodipicolinate + NAD(+) + H2O = (2S,4S)-4-hydroxy-2,3,4,5-tetrahydrodipicolinate + NADH + H(+). It catalyses the reaction (S)-2,3,4,5-tetrahydrodipicolinate + NADP(+) + H2O = (2S,4S)-4-hydroxy-2,3,4,5-tetrahydrodipicolinate + NADPH + H(+). Its pathway is amino-acid biosynthesis; L-lysine biosynthesis via DAP pathway; (S)-tetrahydrodipicolinate from L-aspartate: step 4/4. Catalyzes the conversion of 4-hydroxy-tetrahydrodipicolinate (HTPA) to tetrahydrodipicolinate. The sequence is that of 4-hydroxy-tetrahydrodipicolinate reductase from Rhodopseudomonas palustris (strain HaA2).